Here is a 482-residue protein sequence, read N- to C-terminus: Complement C1r subcomponent-like protein (482 aa).

The N-terminal stretch at 1 to 43 (MSGFRGLVPELENSLWSSPTTSCMSKMCWWLLWGILHTCPTQA) is a signal peptide. The CUB domain occupies 44-166 (SVLLAQQSPQ…KGFLALYQAV (123 aa)). 2 disulfide bridges follow: Cys-97-Cys-115 and Cys-190-Cys-223. Residues 166-225 (VAVNQPNGDTEAVTTPGAPKIQNHCQDPYYKADQTGTLSCPSSWKWKDRQDGGEVPECVP) enclose the Sushi domain. Residues 240-479 (TFGSSRAKLG…YMDWIKRVIE (240 aa)) enclose the Peptidase S1 domain. Residues His-278 and Asp-334 each act as charge relay system in the active site. The N-linked (GlcNAc...) asparagine glycan is linked to Asn-358. Cystine bridges form between Cys-397/Cys-416 and Cys-427/Cys-457. The Charge relay system role is filled by Ser-431.

The protein belongs to the peptidase S1 family. In terms of tissue distribution, expressed in liver (at protein level).

It is found in the secreted. In terms of biological role, mediates the proteolytic cleavage of HP/haptoglobin in the endoplasmic reticulum. In Mus musculus (Mouse), this protein is Complement C1r subcomponent-like protein (C1rl).